The primary structure comprises 87 residues: MNIICLKKSSKRLSTSQAVLVTDIADTGITAAAGADIIAATAAVRAKEDTTTVMAAVIVTNAGATAAVNPKKVLVPLLGQGFFYVTD.

This is an uncharacterized protein from Bacillus subtilis (strain 168).